A 262-amino-acid polypeptide reads, in one-letter code: ATP synthase subunit a (262 aa).

6 helical membrane passes run 32–52, 98–118, 127–147, 153–173, 189–209, and 219–239; these read IAFT…AVFV, LFMF…VLGI, FTIT…VGFW, FFSL…IFPI, LFVA…FVID, and LLVG…EILV.

It belongs to the ATPase A chain family. In terms of assembly, F-type ATPases have 2 components, CF(1) - the catalytic core - and CF(0) - the membrane proton channel. CF(1) has five subunits: alpha(3), beta(3), gamma(1), delta(1), epsilon(1). CF(0) has four main subunits: a, b, b' and c.

The protein localises to the cell inner membrane. In terms of biological role, key component of the proton channel; it plays a direct role in the translocation of protons across the membrane. This chain is ATP synthase subunit a, found in Erythrobacter litoralis (strain HTCC2594).